Here is a 60-residue protein sequence, read N- to C-terminus: Cytotoxin 5 (60 aa).

Cystine bridges form between Cys3–Cys21, Cys14–Cys38, Cys42–Cys53, and Cys54–Cys59.

This sequence belongs to the three-finger toxin family. Short-chain subfamily. Type IA cytotoxin sub-subfamily. In terms of assembly, monomer in solution; Homodimer and oligomer in the presence of negatively charged lipids forming a pore with a size ranging between 20 and 30 Angstroms. In terms of tissue distribution, expressed by the venom gland.

It is found in the secreted. The protein resides in the target cell membrane. Functionally, shows cytolytic activity on many different cells by forming pore in lipid membranes. In vivo, increases heart rate or kills the animal by cardiac arrest. In addition, it binds to heparin with high affinity, interacts with Kv channel-interacting protein 1 (KCNIP1) in a calcium-independent manner, and binds to integrin alpha-V/beta-3 (ITGAV/ITGB3) with moderate affinity. The polypeptide is Cytotoxin 5 (Naja haje haje (Egyptian cobra)).